The following is a 527-amino-acid chain: Catalase (527 aa).

The span at 1-22 (MADNRDPASDQMKHWKEQRAAQ) shows a compositional bias: basic and acidic residues. A disordered region spans residues 1 to 42 (MADNRDPASDQMKHWKEQRAAQKPDVLTTGGGNPVGDKLNSL). The residue at position 2 (Ala2) is a Blocked amino end (Ala); alternate. Ala2 bears the N-acetylalanine; alternate mark. A Phosphoserine modification is found at Ser9. Lys13 carries the N6-succinyllysine modification. Active-site residues include His75 and Asn148. Residues His194, Phe198, Ser201, Arg203, Asn213, and Tyr215 each coordinate NADP(+). At Lys221 the chain carries N6-succinyllysine. Lys233 bears the N6-acetyllysine mark. NADP(+) contacts are provided by Lys237, Trp303, and His305. Residue Tyr358 participates in heme binding. Residues Ser417 and Ser434 each carry the phosphoserine modification. NADP(+) contacts are provided by Gln442, Thr445, and Phe446. Lys449 and Lys480 each carry N6-acetyllysine; alternate. Residues Lys449 and Lys480 each carry the N6-succinyllysine; alternate modification. Position 499 is an N6-acetyllysine (Lys499). Thr511 carries the phosphothreonine modification. Ser517 is subject to Phosphoserine. A Microbody targeting signal; atypical motif is present at residues 524–527 (KANL).

This sequence belongs to the catalase family. Homotetramer. Interacts (via microbody targeting signal) with PEX5, monomeric form interacts with PEX5, leading to its translocation into peroxisomes. The cofactor is heme. It depends on NADP(+) as a cofactor.

The protein localises to the peroxisome matrix. The catalysed reaction is 2 H2O2 = O2 + 2 H2O. Catalyzes the degradation of hydrogen peroxide (H(2)O(2)) generated by peroxisomal oxidases to water and oxygen, thereby protecting cells from the toxic effects of hydrogen peroxide. Promotes growth of cells including T-cells, B-cells, myeloid leukemia cells, melanoma cells, mastocytoma cells and normal and transformed fibroblast cells. This Bos taurus (Bovine) protein is Catalase (CAT).